The following is a 142-amino-acid chain: Domesticated amidase effector 2 (142 aa).

An N-terminal signal peptide occupies residues 1 to 35 (MKLFLISAALVVLGLAAVADAIGCSDPSPFQGRWV). Residues cysteine 43 and histidine 94 contribute to the active site.

This sequence belongs to the cell wall amidase Dae2/Tae2-like family. May be post-translationally modified, since the saliva wild-type protein is slightly heavier than the recombinant one. In terms of tissue distribution, detected in salivary glands and in the gut (at protein level).

The protein localises to the secreted. Functionally, tick gut and saliva antibacterial peptide that directly antagonizes host skin commensals which enter the ticks during feeding. Acts as a cell wall hydrolase that cleaves the bond between gamma-D-glutamate-meso-diaminopimelate of a peptide stem and D-alanine of another peptide stem in peptidoglycans. In vitro, degrades peptidoglycans from both Gram-negative and Gram-positive bacteria. Is not able to traverse the protective outer membrane of Gram-negative bacteria. Is not able to kill Borrelia burgdorferi, one of the Lyme disease-causing bacteria. The sequence is that of Domesticated amidase effector 2 from Ixodes scapularis (Black-legged tick).